The primary structure comprises 406 residues: 26S proteasome regulatory subunit 8 (406 aa).

A2 carries the N-acetylalanine modification. Phosphoserine is present on S120. The tract at residues 186-406 (VLLYGPPGTG…KNMSIKKLWK (221 aa)) is may mediate interaction with PRPF9. 190–197 (GPPGTGKT) is an ATP binding site. The residue at position 222 (K222) is an N6-acetyllysine.

The protein belongs to the AAA ATPase family. In terms of assembly, component of the 19S proteasome regulatory particle complex. The 26S proteasome consists of a 20S core particle (CP) and two 19S regulatory subunits (RP). The regulatory particle is made of a lid composed of 9 subunits, a base containing 6 ATPases including PSMC5 and few additional components. Component of a complex with USP49 and RUVBL1. Interacts with PRPF19. Interacts with TRIM5. Interacts with NDC80. Interacts with PAAF1. Interacts, in vitro, with the thyroid hormone receptor (in a thyroid hormone T3-dependent manner) and with retinoid X receptor (RXR). Interacts with ERCC6.

The protein localises to the cytoplasm. Its subcellular location is the nucleus. Component of the 26S proteasome, a multiprotein complex involved in the ATP-dependent degradation of ubiquitinated proteins. This complex plays a key role in the maintenance of protein homeostasis by removing misfolded or damaged proteins, which could impair cellular functions, and by removing proteins whose functions are no longer required. Therefore, the proteasome participates in numerous cellular processes, including cell cycle progression, apoptosis, or DNA damage repair. PSMC5 belongs to the heterohexameric ring of AAA (ATPases associated with diverse cellular activities) proteins that unfolds ubiquitinated target proteins that are concurrently translocated into a proteolytic chamber and degraded into peptides. The chain is 26S proteasome regulatory subunit 8 (PSMC5) from Bos taurus (Bovine).